We begin with the raw amino-acid sequence, 147 residues long: Epididymal secretory protein E3-alpha (147 aa).

An N-terminal signal peptide occupies residues 1-25 (MTSSLKIWGILLALLCILCRLCVYS).

As to expression, epididymis, with predominant expression in the corpus region. Moderately expressed in the vas deferens; only low levels are detectable in the caput and cauda regions.

It is found in the secreted. In terms of biological role, possible function in sperm maturation. This is Epididymal secretory protein E3-alpha (EDDM3A) from Homo sapiens (Human).